Consider the following 489-residue polypeptide: Tyrosine-protein phosphatase MSG5 (489 aa).

A compositionally biased stretch (basic and acidic residues) spans 1-18 (MQFHSDKQHLDSKTDIDF). The tract at residues 1–30 (MQFHSDKQHLDSKTDIDFKPNSPRSLQNRN) is disordered. S22, S98, and S151 each carry phosphoserine. T178 is modified (phosphothreonine). Residues 233-375 (GPLLVLPPNL…LMEWGTMLSK (143 aa)) enclose the Tyrosine-protein phosphatase domain. C319 acts as the Phosphocysteine intermediate in catalysis. Disordered stretches follow at residues 375 to 401 (KNSP…VSST) and 419 to 489 (LSSS…MFLP). Over residues 419 to 450 (LSSSPNDSSVNSSEVTPRTPATLTGARTALAT) the composition is skewed to low complexity. Over residues 451 to 460 (ERGEDDEHCK) the composition is skewed to basic and acidic residues.

The protein belongs to the protein-tyrosine phosphatase family. Non-receptor class dual specificity subfamily.

It carries out the reaction O-phospho-L-tyrosyl-[protein] + H2O = L-tyrosyl-[protein] + phosphate. Functionally, dual specificity phosphatase that dephosphorylates MAP kinase FUS3 on both a Tyr and a Ser or Thr. Has a role in adaptation to pheromone. This Saccharomyces cerevisiae (strain ATCC 204508 / S288c) (Baker's yeast) protein is Tyrosine-protein phosphatase MSG5 (MSG5).